We begin with the raw amino-acid sequence, 239 residues long: Derlin-2 (239 aa).

Over 1-57 the chain is Cytoplasmic; sequence MAYQSLRLEYLQIPPVSRAYTTACVLTTAAVQLELITPFQLYFNPELIFKHFQIWRL. Residues 58 to 78 traverse the membrane as a helical segment; that stretch reads ITNFLFFGPVGFNFLFNMIFL. Residues 79-96 are Lumenal-facing; it reads YRYCRMLEEGSFRGRTAD. The chain crosses the membrane as a helical span at residues 97–117; it reads FVFMFLFGGFLMTLFGLFVSL. The Cytoplasmic segment spans residues 118 to 150; sequence VFLGQAFTIMLVYVWSRRNPYVRMNFFGLLNFQ. Residues 151–171 traverse the membrane as a helical segment; sequence APFLPWVLMGFSLLLGNSIIV. D172 is a topological domain (lumenal). Residues 173–193 form a helical membrane-spanning segment; it reads LLGIAVGHIYFFLEDIFPNQP. Over 194–239 the chain is Cytoplasmic; sequence GGIRILKTPSILRTIFDTPDEDPNYNPLPEERPGGFAWGEGQRLGG. The segment at 214–239 is disordered; the sequence is EDPNYNPLPEERPGGFAWGEGQRLGG. Residues 229–239 show a composition bias toward gly residues; that stretch reads FAWGEGQRLGG.

This sequence belongs to the derlin family. As to quaternary structure, forms homo- and heterooligomers with DERL3 and, to a lesser extent, with DERL1. Interacts with the SEL1L/SYVN1 and VCP/SELENOS protein complexes. Mediates association between VCP and EDEM1, as well as that between VCP and the misfolded glycoproteins. Interacts with OS9. Interacts with SELENOK and SELENOS. Interacts with the signal recognition particle/SRP and the SRP receptor; in the process of endoplasmic reticulum stress-induced pre-emptive quality control. Interacts with CCDC47. In terms of tissue distribution, widely expressed, with lowest levels in brain and heart.

The protein resides in the endoplasmic reticulum membrane. Its function is as follows. Functional component of endoplasmic reticulum-associated degradation (ERAD) for misfolded lumenal glycoproteins, but not that of misfolded nonglycoproteins. May act by forming a channel that allows the retrotranslocation of misfolded glycoproteins into the cytosol where they are ubiquitinated and degraded by the proteasome. May mediate the interaction between VCP and misfolded glycoproteins. May also be involved in endoplasmic reticulum stress-induced pre-emptive quality control, a mechanism that selectively attenuates the translocation of newly synthesized proteins into the endoplasmic reticulum and reroutes them to the cytosol for proteasomal degradation. This Mus musculus (Mouse) protein is Derlin-2.